We begin with the raw amino-acid sequence, 174 residues long: UPF0340 protein SAHV_2098 (174 aa).

The protein belongs to the UPF0340 family.

The chain is UPF0340 protein SAHV_2098 from Staphylococcus aureus (strain Mu3 / ATCC 700698).